Reading from the N-terminus, the 546-residue chain is CTP synthase (546 aa).

Positions 1–265 (MTKYVFVTGG…DEIVCHKLNI (265 aa)) are amidoligase domain. Serine 13 lines the CTP pocket. Residue serine 13 participates in UTP binding. ATP is bound by residues 14–19 (SLGKGI) and aspartate 71. Positions 71 and 139 each coordinate Mg(2+). CTP contacts are provided by residues 146–148 (DIE), 186–191 (KTKPTQ), and lysine 222. UTP contacts are provided by residues 186-191 (KTKPTQ) and lysine 222. The 254-residue stretch at 290 to 543 (KIAFVGKYVD…VKAALANQKA (254 aa)) folds into the Glutamine amidotransferase type-1 domain. L-glutamine is bound at residue glycine 351. The Nucleophile; for glutamine hydrolysis role is filled by cysteine 378. Residues 379–382 (LGMQ), glutamate 402, and arginine 469 contribute to the L-glutamine site. Active-site residues include histidine 516 and glutamate 518.

This sequence belongs to the CTP synthase family. Homotetramer.

It carries out the reaction UTP + L-glutamine + ATP + H2O = CTP + L-glutamate + ADP + phosphate + 2 H(+). It catalyses the reaction L-glutamine + H2O = L-glutamate + NH4(+). The enzyme catalyses UTP + NH4(+) + ATP = CTP + ADP + phosphate + 2 H(+). Its pathway is pyrimidine metabolism; CTP biosynthesis via de novo pathway; CTP from UDP: step 2/2. Its activity is regulated as follows. Allosterically activated by GTP, when glutamine is the substrate; GTP has no effect on the reaction when ammonia is the substrate. The allosteric effector GTP functions by stabilizing the protein conformation that binds the tetrahedral intermediate(s) formed during glutamine hydrolysis. Inhibited by the product CTP, via allosteric rather than competitive inhibition. Catalyzes the ATP-dependent amination of UTP to CTP with either L-glutamine or ammonia as the source of nitrogen. Regulates intracellular CTP levels through interactions with the four ribonucleotide triphosphates. This chain is CTP synthase, found in Dechloromonas aromatica (strain RCB).